The chain runs to 270 residues: MTSRRRTDHLERTASVHRQMELFSARVCDIISESDTVKRLRLEVAHPDFSFRAGQWVDFFIPGVDTVGGFSICSSPGLLKREGAIELAVKYARHPPAHWIHTECSVDSQVAVRVGGNFYFDPQPSNPVVDLLLVAGGVGINPLYSILLHAADLHRHTHSHRYTPGHTHLCYSAKNTTELLFKDTIIDICHERPDKFSCHFHVTQQSSDIEPQLQPYTIRGRISAEELQRYVDPERTLCYLCGPPPMIEKVSSDLQSTGLPEDRILFEKWW.

Residues 20–123 form the FAD-binding FR-type domain; the sequence is MELFSARVCD…VGGNFYFDPQ (104 aa). 137-142 provides a ligand contact to NAD(+); the sequence is GVGINP.

The chain is Oxidoreductase NAD-binding domain-containing protein 1 (oxnad1) from Danio rerio (Zebrafish).